The sequence spans 617 residues: MALLQIAEPGQSSAPHEHKLAAGIDLGTTNSLVASVRSGDATTLNDEQGRSILPSVVNYSAESTVVGYDAKAKAEFEPENTIISVKRLIGRSLKDIQSRYPSLPYRFKESDNGLPVLQTAQGDKNPIEVSADILKALGKRAEETLGGDLAGVVITVPAYFDDAQRAGTKDAAKLAGLHVLRLLNEPTAAAIAYGLDSGQEGVIAVYDLGGGTFDISILRLSKGVFEVLATGGDSALGGDDFDHLLADYLMEQAGLEAPLSAEKNRALLNIATATKIAFSEQDSVEVDVFGWKGTVTREQFEDLIRPLVKKTLMSCRRALKDADVEAEEVLEVVMVGGSTRTLLVREMVGEFFGRTPLTSINPDEVVAIGAGIQADILAGNKPDSEMLLLDVIPLSLGIETMGGLVEKIIPRNTTIPVARAQEFTTFKDGQTAMSVHVVQGEREMVDDCRSLARFSLKGIPPMAAGAAHIRVTYQVDADGLLSVTAMEKSTGVQSEIQVKPSYGLSDNEVANMLRDSMTHAKEDMQARALAEQRVEADRVIEGLIAAMQADGDELLSEQEKQDLLKAIEALIELRNGDDANAIEQGIKDTDKASQDFASRRMDKSIRAALSGQSVDDI.

It belongs to the heat shock protein 70 family.

Its function is as follows. Probable chaperone. Has a low intrinsic ATPase activity which is markedly stimulated by HscB. This is Chaperone protein HscA homolog from Vibrio parahaemolyticus serotype O3:K6 (strain RIMD 2210633).